Reading from the N-terminus, the 456-residue chain is Sensitive to high expression protein 9, mitochondrial (456 aa).

Residues 1–30 (MLRYYGATRNLPLVFSINKLMLRASSFTRP) constitute a mitochondrion transit peptide. The Mitochondrial matrix segment spans residues 31–296 (FHYSSYSLQN…WSDKIRRTST (266 aa)). 2 coiled-coil regions span residues 71-128 (QHLK…KDEL) and 178-277 (IQKL…YRAI). Residues 297–317 (WGTFILMGMNIFLFIVLQLLL) traverse the membrane as a helical segment. At 318–435 (EPWKRKRLVG…KLDAPLVFDT (118 aa)) the chain is on the mitochondrial intermembrane side. The chain crosses the membrane as a helical span at residues 436 to 456 (LEFYLYSISLVSMTILVSGLI).

The protein belongs to the SHE9 family. As to quaternary structure, homooligomer. Participates in a complex of about 300 kDa.

Its subcellular location is the mitochondrion inner membrane. Its function is as follows. Required for the maintenance of the structure of the mitochondrial inner membrane. Involved in mitochondrial morphology. Causes growth arrest when highly overexpressed. The chain is Sensitive to high expression protein 9, mitochondrial (SHE9) from Saccharomyces cerevisiae (strain ATCC 204508 / S288c) (Baker's yeast).